The chain runs to 970 residues: Serine/threonine-protein kinase PLK4 (970 aa).

Residues 12 to 265 enclose the Protein kinase domain; that stretch reads FKVGNLLGKG…LSSVLDHPFM (254 aa). ATP-binding positions include 18–26 and lysine 41; that span reads LGKGSFAGV. Residues lysine 45 and lysine 46 each carry the N6-acetyllysine modification. Catalysis depends on aspartate 136, which acts as the Proton acceptor. Disordered stretches follow at residues 323–458 and 497–538; these read TVFP…NHLC and SISP…HSVK. Positions 328–356 are enriched in polar residues; it reads NKSSTDFSSSGDGNSFYTQWGNQETSNSG. Positions 360–369 are enriched in basic and acidic residues; that stretch reads VIQDAEERPH. Over residues 379–393 the composition is skewed to polar residues; sequence SDRSGTSNSQSQAKT. A Phosphoserine modification is found at serine 401. Polar residues predominate over residues 438–454; sequence SSSSGSFERPDNNQALS. Positions 504–515 are enriched in basic and acidic residues; it reads FQGHPDLQKDTS. Residues 586–699 form the Cryptic POLO box 1 (CPB1) domain; that stretch reads TLRSITSPLV…SRFVQLVRSK (114 aa). Serine 665 carries the phosphoserine modification. One can recognise a Cryptic POLO box 2 (CPB2) domain in the interval 700–813; that stretch reads SPKITYFTRY…GRKPGSTSSP (114 aa). The tract at residues 808–828 is disordered; it reads GSTSSPKALSPPPSVDSNYPT. A Phosphoserine modification is found at serine 817. In terms of domain architecture, POLO box spans 886-964; it reads QLLKSVFVKN…LSSILLMFSN (79 aa).

This sequence belongs to the protein kinase superfamily. Ser/Thr protein kinase family. CDC5/Polo subfamily. In terms of assembly, homodimer. Interacts with CEP152 (via N-terminus). Interacts with CEP78; this interaction may be important for proper PLK4 localization to the centriole and PLK4-induced overduplication of centrioles. Interacts with CEP131. Interacts simultaneously with TENT5C and CEP192. Interacts with TENT5C; this interaction leads to the TENT5C recruitment in the centrosome. Interacts with CEP85; this interaction may be important in cell migration and centriole assembly. Acetylation by KAT2A and KAT2B impairs kinase activity by shifting the kinase to an inactive conformation. Post-translationally, ubiquitinated; leading to its degradation by the proteasome. Deubiquitinated by USP54; leading to PLK4 stabilization. In terms of processing, tyrosine-phosphorylated by TEC.

It localises to the cytoplasm. The protein localises to the cytoskeleton. The protein resides in the microtubule organizing center. It is found in the centrosome. Its subcellular location is the centriole. It localises to the nucleus. The protein localises to the nucleolus. The protein resides in the cleavage furrow. It carries out the reaction L-seryl-[protein] + ATP = O-phospho-L-seryl-[protein] + ADP + H(+). The catalysed reaction is L-threonyl-[protein] + ATP = O-phospho-L-threonyl-[protein] + ADP + H(+). Functionally, serine/threonine-protein kinase that plays a central role in centriole duplication. Able to trigger procentriole formation on the surface of the parental centriole cylinder, leading to the recruitment of centriole biogenesis proteins such as SASS6, CPAP, CCP110, CEP135 and gamma-tubulin. When overexpressed, it is able to induce centrosome amplification through the simultaneous generation of multiple procentrioles adjoining each parental centriole during S phase. Phosphorylates 'Ser-151' of FBXW5 during the G1/S transition, leading to inhibit FBXW5 ability to ubiquitinate SASS6. Its central role in centriole replication suggests a possible role in tumorigenesis, centrosome aberrations being frequently observed in tumors. Also involved in deuterosome-mediated centriole amplification in multiciliated that can generate more than 100 centrioles. Also involved in trophoblast differentiation by phosphorylating HAND1, leading to disrupt the interaction between HAND1 and MDFIC and activate HAND1. Phosphorylates CDC25C and CHEK2. Required for the recruitment of STIL to the centriole and for STIL-mediated centriole amplification. Phosphorylates CEP131 at 'Ser-78' and PCM1 at 'Ser-372' which is essential for proper organization and integrity of centriolar satellites. The sequence is that of Serine/threonine-protein kinase PLK4 from Homo sapiens (Human).